Consider the following 223-residue polypeptide: Endonuclease V (223 aa).

Mg(2+) is bound by residues Asp-35 and Asp-103.

The protein belongs to the endonuclease V family. Mg(2+) serves as cofactor.

It localises to the cytoplasm. It carries out the reaction Endonucleolytic cleavage at apurinic or apyrimidinic sites to products with a 5'-phosphate.. In terms of biological role, DNA repair enzyme involved in the repair of deaminated bases. Selectively cleaves double-stranded DNA at the second phosphodiester bond 3' to a deoxyinosine leaving behind the intact lesion on the nicked DNA. In Salmonella enteritidis PT4 (strain P125109), this protein is Endonuclease V.